The primary structure comprises 440 residues: Virion host shutoff protein (440 aa).

2 disordered regions span residues 98–144 and 265–312; these read NIDH…RRKT and IDEP…AGPG. Over residues 266–281 the composition is skewed to low complexity; the sequence is DEPPAASEESSASDQQ.

Belongs to the herpesviridae VHS protein family.

It is found in the virion. Functionally, minor structural protein that acts as an endoribonuclease during lytic infection. Degrades host mRNAs in the cytoplasm by cutting them at preferred sites, including some in regions of translation initiation. The protein is Virion host shutoff protein (UL41) of Amazona oratrix (yellow-headed parrot).